We begin with the raw amino-acid sequence, 160 residues long: Lipoprotein signal peptidase (160 aa).

Helical transmembrane passes span 5-25, 60-80, and 84-104; these read LVFF…KFII, IEWL…AFFI, and LPFL…AGTV. Active-site residues include Asp118 and Asp132. The chain crosses the membrane as a helical span at residues 128-148; sequence FNIADSCLTVGVIGLLLLYIV.

Belongs to the peptidase A8 family.

Its subcellular location is the cell membrane. The enzyme catalyses Release of signal peptides from bacterial membrane prolipoproteins. Hydrolyzes -Xaa-Yaa-Zaa-|-(S,diacylglyceryl)Cys-, in which Xaa is hydrophobic (preferably Leu), and Yaa (Ala or Ser) and Zaa (Gly or Ala) have small, neutral side chains.. The protein operates within protein modification; lipoprotein biosynthesis (signal peptide cleavage). Functionally, this protein specifically catalyzes the removal of signal peptides from prolipoproteins. The sequence is that of Lipoprotein signal peptidase from Dehalococcoides mccartyi (strain ATCC BAA-2100 / JCM 16839 / KCTC 5957 / BAV1).